A 410-amino-acid polypeptide reads, in one-letter code: Monoglucosyldiacylglycerol epimerase (410 aa).

A signal peptide spans M1–A14. 2 helical membrane passes run A71–F91 and L96–A116. Residue Y320 is the Proton acceptor of the active site. A helical membrane pass occupies residues I380–S400.

It belongs to the short-chain dehydrogenases/reductases (SDR) family.

The protein localises to the membrane. The enzyme catalyses a 1,2-diacyl-3-O-(beta-D-glucopyranosyl)-sn-glycerol = a 1,2-diacyl-3-O-(beta-D-galactosyl)-sn-glycerol. Functionally, involved in the biosynthesis of galactolipids found in the photosynthetic membranes. Catalyzes the isomerization of monoglucosyldiacylglycerol (GlcDG) to yield monogalactosyldiacylglycerol (MGDG). The chain is Monoglucosyldiacylglycerol epimerase from Synechocystis sp. (strain ATCC 27184 / PCC 6803 / Kazusa).